The chain runs to 671 residues: DNA ligase (671 aa).

NAD(+) contacts are provided by residues 32-36 (DAEYD), 81-82 (SL), and Glu113. Lys115 acts as the N6-AMP-lysine intermediate in catalysis. Residues Arg136, Glu173, Lys290, and Lys314 each coordinate NAD(+). Zn(2+)-binding residues include Cys408, Cys411, Cys426, and Cys432. The BRCT domain maps to 593 to 671 (EIDSPFAGKT…EAEMMRLLGE (79 aa)).

Belongs to the NAD-dependent DNA ligase family. LigA subfamily. The cofactor is Mg(2+). Requires Mn(2+) as cofactor.

It catalyses the reaction NAD(+) + (deoxyribonucleotide)n-3'-hydroxyl + 5'-phospho-(deoxyribonucleotide)m = (deoxyribonucleotide)n+m + AMP + beta-nicotinamide D-nucleotide.. Functionally, DNA ligase that catalyzes the formation of phosphodiester linkages between 5'-phosphoryl and 3'-hydroxyl groups in double-stranded DNA using NAD as a coenzyme and as the energy source for the reaction. It is essential for DNA replication and repair of damaged DNA. The protein is DNA ligase of Klebsiella pneumoniae subsp. pneumoniae (strain ATCC 700721 / MGH 78578).